The following is a 922-amino-acid chain: Protein translocase subunit SecA (922 aa).

ATP-binding positions include glutamine 87, 105-109 (GEGKT), and aspartate 519. The segment at 850–891 (HASRQMRSIQGNAQHNSMGSFSGSGHGMGPTALSARSRPENA) is disordered. Over residues 854–865 (QMRSIQGNAQHN) the composition is skewed to polar residues. Residues cysteine 906, cysteine 908, cysteine 917, and cysteine 918 each contribute to the Zn(2+) site.

Belongs to the SecA family. As to quaternary structure, monomer and homodimer. Part of the essential Sec protein translocation apparatus which comprises SecA, SecYEG and auxiliary proteins SecDF. Other proteins may also be involved. It depends on Zn(2+) as a cofactor.

The protein resides in the cell inner membrane. Its subcellular location is the cytoplasm. The enzyme catalyses ATP + H2O + cellular proteinSide 1 = ADP + phosphate + cellular proteinSide 2.. In terms of biological role, part of the Sec protein translocase complex. Interacts with the SecYEG preprotein conducting channel. Has a central role in coupling the hydrolysis of ATP to the transfer of proteins into and across the cell membrane, serving as an ATP-driven molecular motor driving the stepwise translocation of polypeptide chains across the membrane. This chain is Protein translocase subunit SecA, found in Treponema denticola (strain ATCC 35405 / DSM 14222 / CIP 103919 / JCM 8153 / KCTC 15104).